Here is a 507-residue protein sequence, read N- to C-terminus: Arabinose import ATP-binding protein AraG (507 aa).

2 consecutive ABC transporter domains span residues 14–249 and 249–505; these read LRFN…MVGR and RDIQ…LPRT. Residue 46–53 coordinates ATP; that stretch reads GENGAGKS.

The protein belongs to the ABC transporter superfamily. Arabinose importer (TC 3.A.1.2.2) family. The complex is composed of two ATP-binding proteins (AraG), two transmembrane proteins (AraH) and a solute-binding protein (AraF).

It is found in the cell inner membrane. It catalyses the reaction L-arabinose(out) + ATP + H2O = L-arabinose(in) + ADP + phosphate + H(+). Functionally, part of the ABC transporter complex AraFGH involved in arabinose import. Responsible for energy coupling to the transport system. This is Arabinose import ATP-binding protein AraG from Pseudomonas syringae pv. tomato (strain ATCC BAA-871 / DC3000).